The chain runs to 336 residues: DNA-directed RNA polymerase subunit alpha (336 aa).

An alpha N-terminal domain (alpha-NTD) region spans residues 1–232; it reads MIQKNWQELI…DQLGLFVNFE (232 aa). The segment at 248-336 is alpha C-terminal domain (alpha-CTD); that stretch reads FNPALLKKVD…ELAKRYEDQY (89 aa).

Belongs to the RNA polymerase alpha chain family. In terms of assembly, homodimer. The RNAP catalytic core consists of 2 alpha, 1 beta, 1 beta' and 1 omega subunit. When a sigma factor is associated with the core the holoenzyme is formed, which can initiate transcription.

It carries out the reaction RNA(n) + a ribonucleoside 5'-triphosphate = RNA(n+1) + diphosphate. Its function is as follows. DNA-dependent RNA polymerase catalyzes the transcription of DNA into RNA using the four ribonucleoside triphosphates as substrates. The protein is DNA-directed RNA polymerase subunit alpha of Chelativorans sp. (strain BNC1).